Consider the following 360-residue polypeptide: Peptide chain release factor 1 (360 aa).

Gln-235 is subject to N5-methylglutamine.

This sequence belongs to the prokaryotic/mitochondrial release factor family. In terms of processing, methylated by PrmC. Methylation increases the termination efficiency of RF1.

Its subcellular location is the cytoplasm. Peptide chain release factor 1 directs the termination of translation in response to the peptide chain termination codons UAG and UAA. This chain is Peptide chain release factor 1, found in Bordetella pertussis (strain Tohama I / ATCC BAA-589 / NCTC 13251).